The following is an 826-amino-acid chain: Arsenite oxidase subunit AioA (826 aa).

Residues C22, C25, and C29 each coordinate [3Fe-4S] cluster. 4 residues coordinate substrate: H196, E204, R420, and H424.

This sequence belongs to the prokaryotic molybdopterin-containing oxidoreductase family. In terms of assembly, heterodimer consisting of a large and a small subunit. [3Fe-4S] cluster is required as a cofactor. Mo-bis(molybdopterin guanine dinucleotide) serves as cofactor.

The enzyme catalyses 2 oxidized [azurin] + arsenite + H2O = 2 reduced [azurin] + arsenate + 3 H(+). Functionally, involved in the detoxification of arsenic. Oxidizes As(III)O3(3-) (arsenite) to the somewhat less toxic As(V)O4(3-) (arsenate). The protein is Arsenite oxidase subunit AioA (aioA) of Alcaligenes faecalis.